We begin with the raw amino-acid sequence, 285 residues long: Ribose-phosphate pyrophosphokinase (285 aa).

Residues 34-36 (DGE) and 91-92 (RQ) each bind ATP. H124 and D162 together coordinate Mg(2+). Residue K185 is part of the active site. D-ribose 5-phosphate contacts are provided by residues R187, D211, and 215 to 219 (STGGT).

It belongs to the ribose-phosphate pyrophosphokinase family. Class III (archaeal) subfamily. Mg(2+) is required as a cofactor.

The protein resides in the cytoplasm. It carries out the reaction D-ribose 5-phosphate + ATP = 5-phospho-alpha-D-ribose 1-diphosphate + AMP + H(+). It participates in metabolic intermediate biosynthesis; 5-phospho-alpha-D-ribose 1-diphosphate biosynthesis; 5-phospho-alpha-D-ribose 1-diphosphate from D-ribose 5-phosphate (route I): step 1/1. Involved in the biosynthesis of the central metabolite phospho-alpha-D-ribosyl-1-pyrophosphate (PRPP) via the transfer of pyrophosphoryl group from ATP to 1-hydroxyl of ribose-5-phosphate (Rib-5-P). In Pyrococcus abyssi (strain GE5 / Orsay), this protein is Ribose-phosphate pyrophosphokinase.